A 205-amino-acid polypeptide reads, in one-letter code: Adenylyl-sulfate kinase (205 aa).

31–38 contributes to the ATP binding site; the sequence is GLSGAGKS. Catalysis depends on S105, which acts as the Phosphoserine intermediate.

The protein belongs to the APS kinase family.

It carries out the reaction adenosine 5'-phosphosulfate + ATP = 3'-phosphoadenylyl sulfate + ADP + H(+). The protein operates within sulfur metabolism; hydrogen sulfide biosynthesis; sulfite from sulfate: step 2/3. In terms of biological role, catalyzes the synthesis of activated sulfate. The sequence is that of Adenylyl-sulfate kinase from Shewanella baltica (strain OS223).